Here is a 620-residue protein sequence, read N- to C-terminus: Dihydroxy-acid dehydratase (620 aa).

Mg(2+) is bound at residue Asp81. Cys122 provides a ligand contact to [2Fe-2S] cluster. Asp123 and Lys124 together coordinate Mg(2+). Lys124 bears the N6-carboxylysine mark. Residue Cys195 participates in [2Fe-2S] cluster binding. Residue Glu491 participates in Mg(2+) binding. Ser517 (proton acceptor) is an active-site residue.

Belongs to the IlvD/Edd family. Homodimer. It depends on [2Fe-2S] cluster as a cofactor. The cofactor is Mg(2+).

It catalyses the reaction (2R)-2,3-dihydroxy-3-methylbutanoate = 3-methyl-2-oxobutanoate + H2O. The catalysed reaction is (2R,3R)-2,3-dihydroxy-3-methylpentanoate = (S)-3-methyl-2-oxopentanoate + H2O. It functions in the pathway amino-acid biosynthesis; L-isoleucine biosynthesis; L-isoleucine from 2-oxobutanoate: step 3/4. The protein operates within amino-acid biosynthesis; L-valine biosynthesis; L-valine from pyruvate: step 3/4. Its function is as follows. Functions in the biosynthesis of branched-chain amino acids. Catalyzes the dehydration of (2R,3R)-2,3-dihydroxy-3-methylpentanoate (2,3-dihydroxy-3-methylvalerate) into 2-oxo-3-methylpentanoate (2-oxo-3-methylvalerate) and of (2R)-2,3-dihydroxy-3-methylbutanoate (2,3-dihydroxyisovalerate) into 2-oxo-3-methylbutanoate (2-oxoisovalerate), the penultimate precursor to L-isoleucine and L-valine, respectively. This is Dihydroxy-acid dehydratase from Colwellia psychrerythraea (strain 34H / ATCC BAA-681) (Vibrio psychroerythus).